We begin with the raw amino-acid sequence, 271 residues long: 3-methyl-2-oxobutanoate hydroxymethyltransferase (271 aa).

2 residues coordinate Mg(2+): Asp-51 and Asp-90. 3-methyl-2-oxobutanoate-binding positions include 51–52 (DS), Asp-90, and Lys-119. Glu-121 provides a ligand contact to Mg(2+). The active-site Proton acceptor is Glu-188.

The protein belongs to the PanB family. As to quaternary structure, homodecamer; pentamer of dimers. Mg(2+) serves as cofactor.

The protein resides in the cytoplasm. The catalysed reaction is 3-methyl-2-oxobutanoate + (6R)-5,10-methylene-5,6,7,8-tetrahydrofolate + H2O = 2-dehydropantoate + (6S)-5,6,7,8-tetrahydrofolate. Its pathway is cofactor biosynthesis; (R)-pantothenate biosynthesis; (R)-pantoate from 3-methyl-2-oxobutanoate: step 1/2. Catalyzes the reversible reaction in which hydroxymethyl group from 5,10-methylenetetrahydrofolate is transferred onto alpha-ketoisovalerate to form ketopantoate. This chain is 3-methyl-2-oxobutanoate hydroxymethyltransferase, found in Azoarcus sp. (strain BH72).